A 186-amino-acid polypeptide reads, in one-letter code: Glutathione-independent glyoxalase DJR-1.2 (186 aa).

Active-site residues include Glu-20, Cys-105, and His-124.

The protein belongs to the peptidase C56 family. DJ-1 subfamily. As to expression, expressed in various tissues, including pharyngeal muscles, pharynx-intestinal valve, ventral nerve cord, spermatheca, rectal gland, inner labial (IL) cells of head neurons, phasmid (PHA/PHB) neurons in tail and supporting sheath/socket cells, as well as in head mesodermal cells (HMC), excretory canals and coelomocytes.

It is found in the cytoplasm. It catalyses the reaction methylglyoxal + H2O = (R)-lactate + H(+). Functionally, catalyzes the conversion of methylglyoxal (MG) or glyoxal (GO) to D-lactate or glycolic acid respectively in a single glutathione (GSH)-independent step. May play a role in detoxifying endogenously produced glyoxals. Involved in protection against glyoxal-induced cell death. Protects dopaminergic neurons from glyoxal-dependent neuronal degeneration. The protein is Glutathione-independent glyoxalase DJR-1.2 of Caenorhabditis elegans.